A 79-amino-acid polypeptide reads, in one-letter code: Sec-independent protein translocase protein TatA (79 aa).

A helical transmembrane segment spans residues 1–21; sequence MGSFSIWHWLIVLAIVVLVFG. The segment at 43 to 79 is disordered; sequence VKDGSTSTDTPAAAPGQVAGQTAADKTTIDVEAKQKG. Basic and acidic residues predominate over residues 69–79; that stretch reads TTIDVEAKQKG.

Belongs to the TatA/E family. The Tat system comprises two distinct complexes: a TatABC complex, containing multiple copies of TatA, TatB and TatC subunits, and a separate TatA complex, containing only TatA subunits. Substrates initially bind to the TatABC complex, which probably triggers association of the separate TatA complex to form the active translocon.

It localises to the cell inner membrane. Functionally, part of the twin-arginine translocation (Tat) system that transports large folded proteins containing a characteristic twin-arginine motif in their signal peptide across membranes. TatA could form the protein-conducting channel of the Tat system. The protein is Sec-independent protein translocase protein TatA of Delftia acidovorans (strain DSM 14801 / SPH-1).